Consider the following 484-residue polypeptide: Protein arginine methyltransferase NDUFAF7 homolog, mitochondrial (484 aa).

The N-terminal 12 residues, 1-12 (MFRSITQRVIRN), are a transit peptide targeting the mitochondrion.

The protein belongs to the NDUFAF7 family. In terms of assembly, homodimer. Interacts with ndufs2.

It localises to the mitochondrion. The enzyme catalyses L-arginyl-[protein] + 2 S-adenosyl-L-methionine = N(omega),N(omega)'-dimethyl-L-arginyl-[protein] + 2 S-adenosyl-L-homocysteine + 2 H(+). In terms of biological role, involved in the assembly or stability of mitochondrial NADH:ubiquinone oxidoreductase complex (complex I). Acts as an arginine methyltransferase and probably acts by mediating arginine methylation of ndufs2. The polypeptide is Protein arginine methyltransferase NDUFAF7 homolog, mitochondrial (Dictyostelium discoideum (Social amoeba)).